The following is a 180-amino-acid chain: SPbeta prophage-derived uncharacterized protein YosC (180 aa).

This Bacillus subtilis (strain 168) protein is SPbeta prophage-derived uncharacterized protein YosC (yosC).